The primary structure comprises 418 residues: MYTLRFVRENENLMREALRKRQYDESIVDQLLAVDEQRRKEVTSLQELNTRRNELTSVVSKKKKDGTDASQEIELLKKLKEEVSVKETIVSELESKIQEILKQLPNIPHESVPTGKDSSENVEVRRWGEPRTFAFEPKPHWEIGENMNILDFQRAAKISGSRFVAYQGLGALLELTLINFMVWTHVKDHGYTFVIPPYLVKSDTAFGTGHLPKFKDEMYYCPEDDLYLIPTAELPMVAYHSGEVLVEAELPKRYVAYSACFRREAGAAGRDTRGLIRRHQFNKVELIKITKPEDSYNELESMVSDAESILQLLELPYRVVLLCTGDMGFAAAKTYDIEVWMPSYGRYVEISSCSNTEGFQARRANVRMRRPDGSNDYPHMLNGSGLAVGRTLAAIMENYQREDGTFDIPQALRAFMFA.

Thr-231–Glu-233 lines the L-serine pocket. Arg-262–Glu-264 contacts ATP. Glu-285 contacts L-serine. Glu-349–Ser-352 lines the ATP pocket. Residue Ser-384 participates in L-serine binding.

This sequence belongs to the class-II aminoacyl-tRNA synthetase family. Type-1 seryl-tRNA synthetase subfamily. As to quaternary structure, homodimer. The tRNA molecule binds across the dimer.

It is found in the cytoplasm. It carries out the reaction tRNA(Ser) + L-serine + ATP = L-seryl-tRNA(Ser) + AMP + diphosphate + H(+). The catalysed reaction is tRNA(Sec) + L-serine + ATP = L-seryl-tRNA(Sec) + AMP + diphosphate + H(+). It functions in the pathway aminoacyl-tRNA biosynthesis; selenocysteinyl-tRNA(Sec) biosynthesis; L-seryl-tRNA(Sec) from L-serine and tRNA(Sec): step 1/1. In terms of biological role, catalyzes the attachment of serine to tRNA(Ser). Is also able to aminoacylate tRNA(Sec) with serine, to form the misacylated tRNA L-seryl-tRNA(Sec), which will be further converted into selenocysteinyl-tRNA(Sec). In Coprothermobacter proteolyticus (strain ATCC 35245 / DSM 5265 / OCM 4 / BT), this protein is Serine--tRNA ligase.